Consider the following 156-residue polypeptide: DNA mismatch endonuclease Vsr (156 aa).

Positions 51 and 63 each coordinate Mg(2+).

This sequence belongs to the Vsr family. Requires Mg(2+) as cofactor. The cofactor is Zn(2+).

In terms of biological role, deamination of 5-methylcytosine in DNA results in T/G mismatches. If unrepaired, these mismatches can lead to C-to-T transition mutations. The very short patch (VSP) repair process in E.coli counteracts the mutagenic process by repairing the mismatches in favor of the G-containing strand. This enzyme is an endonuclease that nicks double-stranded DNA within the sequence CT(AT)GN or NT(AT)GG next to the thymidine residue that is mismatched to 2'-deoxyguanosine. The incision is mismatch-dependent and strand-specific. The sequence is that of DNA mismatch endonuclease Vsr from Escherichia coli (strain K12).